Reading from the N-terminus, the 270-residue chain is Nuclease PA3 (270 aa).

Residues tryptophan 1, histidine 6, histidine 15, aspartate 45, and histidine 60 each contribute to the a divalent metal cation site. 1–6 (WGALGH) lines the substrate pocket. Residues 45 to 51 (DEYRLTS), 60 to 63 (HFID), and 73 to 78 (NVDYER) each bind substrate. 2 cysteine pairs are disulfide-bonded: cysteine 72/cysteine 217 and cysteine 80/cysteine 85. Asparagine 92 contacts substrate. N-linked (GlcNAc...) asparagine glycosylation is present at asparagine 92. The a divalent metal cation site is built by histidine 116, aspartate 120, and histidine 126. Positions 116–164 (HFIGDMTQPLHDEAYAVGGNKINVTFDGYHDNLHSDWDTYMPQKLIGGH) are substrate binding. Residue asparagine 138 is glycosylated (N-linked (GlcNAc...) asparagine). Residues histidine 149 and aspartate 153 each contribute to the a divalent metal cation site. N-linked (GlcNAc...) asparagine glycosylation is found at asparagine 184 and asparagine 197.

The protein belongs to the nuclease type I family. Zn(2+) serves as cofactor.

It localises to the secreted. It carries out the reaction a ribonucleoside 3'-phosphate + H2O = a ribonucleoside + phosphate. Its function is as follows. Hydrolyzes only single-stranded DNA and RNA without apparent specificity for bases. The protein is Nuclease PA3 of Penicillium sp.